The following is a 338-amino-acid chain: uncharacterized protein (338 aa).

A run of 6 helical transmembrane segments spans residues 13-33 (PAYS…DFLM), 71-91 (GLYS…ALFF), 110-130 (TLCF…VYVP), 176-196 (YGYR…LLFY), 218-238 (LITG…LDVA), and 301-321 (FRGF…MFVF). 3 Solcar repeats span residues 13–100 (PAYS…TKRH), 108–202 (PETL…LRQV), and 216–328 (RELI…IIRL).

It belongs to the mitochondrial carrier (TC 2.A.29) family.

The protein resides in the mitochondrion inner membrane. In terms of biological role, mitochondrial solute carriers shuttle metabolites, nucleotides, and cofactors through the mitochondrial inner membrane. This is an uncharacterized protein from Schizosaccharomyces pombe (strain 972 / ATCC 24843) (Fission yeast).